Reading from the N-terminus, the 225-residue chain is Ribosome maturation factor RimM (225 aa).

Residues 144–225 (ADEFYWVDLI…RIVVDWEADY (82 aa)) enclose the PRC barrel domain.

It belongs to the RimM family. As to quaternary structure, binds ribosomal protein uS19.

The protein localises to the cytoplasm. Functionally, an accessory protein needed during the final step in the assembly of 30S ribosomal subunit, possibly for assembly of the head region. Essential for efficient processing of 16S rRNA. May be needed both before and after RbfA during the maturation of 16S rRNA. It has affinity for free ribosomal 30S subunits but not for 70S ribosomes. This is Ribosome maturation factor RimM from Burkholderia ambifaria (strain MC40-6).